Here is a 182-residue protein sequence, read N- to C-terminus: Large ribosomal subunit protein uL5 (182 aa).

It belongs to the universal ribosomal protein uL5 family. Part of the 50S ribosomal subunit; part of the 5S rRNA/L5/L18/L25 subcomplex. Contacts the 5S rRNA and the P site tRNA. Forms a bridge to the 30S subunit in the 70S ribosome.

In terms of biological role, this is one of the proteins that bind and probably mediate the attachment of the 5S RNA into the large ribosomal subunit, where it forms part of the central protuberance. In the 70S ribosome it contacts protein S13 of the 30S subunit (bridge B1b), connecting the 2 subunits; this bridge is implicated in subunit movement. Contacts the P site tRNA; the 5S rRNA and some of its associated proteins might help stabilize positioning of ribosome-bound tRNAs. In Acidobacterium capsulatum (strain ATCC 51196 / DSM 11244 / BCRC 80197 / JCM 7670 / NBRC 15755 / NCIMB 13165 / 161), this protein is Large ribosomal subunit protein uL5.